Here is a 597-residue protein sequence, read N- to C-terminus: Sulfite reductase [NADPH] flavoprotein alpha-component (597 aa).

The Flavodoxin-like domain occupies 62 to 200 (VTVLSASQTG…TADKWIQDVV (139 aa)). Residues 68–73 (SQTGNA), 115–118 (STQG), and 151–160 (LGDTSYPNFC) contribute to the FMN site. The FAD-binding FR-type domain maps to 232-446 (ENPYTAKLIT…VEPNDNFRLP (215 aa)). Residues threonine 320, asparagine 354, 384–387 (RLYS), 402–404 (SVG), and 417–420 (GVAS) each bind FAD. Residues 517 to 518 (SR), 523 to 527 (KIYVQ), and aspartate 559 contribute to the NADP(+) site. Tyrosine 597 serves as a coordination point for FAD.

This sequence belongs to the NADPH-dependent sulphite reductase flavoprotein subunit CysJ family. The protein in the N-terminal section; belongs to the flavodoxin family. In the C-terminal section; belongs to the flavoprotein pyridine nucleotide cytochrome reductase family. In terms of assembly, alpha(8)-beta(8). The alpha component is a flavoprotein, the beta component is a hemoprotein. Requires FAD as cofactor. The cofactor is FMN.

It carries out the reaction hydrogen sulfide + 3 NADP(+) + 3 H2O = sulfite + 3 NADPH + 4 H(+). It functions in the pathway sulfur metabolism; hydrogen sulfide biosynthesis; hydrogen sulfide from sulfite (NADPH route): step 1/1. Component of the sulfite reductase complex that catalyzes the 6-electron reduction of sulfite to sulfide. This is one of several activities required for the biosynthesis of L-cysteine from sulfate. The flavoprotein component catalyzes the electron flow from NADPH -&gt; FAD -&gt; FMN to the hemoprotein component. The protein is Sulfite reductase [NADPH] flavoprotein alpha-component of Mannheimia succiniciproducens (strain KCTC 0769BP / MBEL55E).